Reading from the N-terminus, the 255-residue chain is tRNA (guanine-N(1)-)-methyltransferase (255 aa).

Residues G117 and 137 to 142 each bind S-adenosyl-L-methionine; that span reads IGDYVL.

This sequence belongs to the RNA methyltransferase TrmD family. As to quaternary structure, homodimer.

The protein localises to the cytoplasm. It catalyses the reaction guanosine(37) in tRNA + S-adenosyl-L-methionine = N(1)-methylguanosine(37) in tRNA + S-adenosyl-L-homocysteine + H(+). Specifically methylates guanosine-37 in various tRNAs. This Glaesserella parasuis serovar 5 (strain SH0165) (Haemophilus parasuis) protein is tRNA (guanine-N(1)-)-methyltransferase.